The following is a 362-amino-acid chain: tRNA-specific 2-thiouridylase MnmA (362 aa).

ATP-binding positions include 6-13 (AMSGGVDS) and Leu-32. Catalysis depends on Cys-101, which acts as the Nucleophile. Residues Cys-101 and Cys-197 are joined by a disulfide bond. Gly-125 provides a ligand contact to ATP. Residues 147–149 (KDQ) are interaction with tRNA. Cys-197 serves as the catalytic Cysteine persulfide intermediate.

The protein belongs to the MnmA/TRMU family.

It is found in the cytoplasm. The catalysed reaction is S-sulfanyl-L-cysteinyl-[protein] + uridine(34) in tRNA + AH2 + ATP = 2-thiouridine(34) in tRNA + L-cysteinyl-[protein] + A + AMP + diphosphate + H(+). Its function is as follows. Catalyzes the 2-thiolation of uridine at the wobble position (U34) of tRNA, leading to the formation of s(2)U34. In Acidothermus cellulolyticus (strain ATCC 43068 / DSM 8971 / 11B), this protein is tRNA-specific 2-thiouridylase MnmA.